The primary structure comprises 268 residues: Activator of basal transcription 1 (268 aa).

The stretch at 6–38 (KLVEEQKAAMEEEKEVNAEAAEELEEAEEASCN) forms a coiled coil. The 98-residue stretch at 47-144 (GIVYLGHVPP…RKRSPFRYDL (98 aa)) folds into the RRM domain. Residues 163 to 193 (AFERQVRRQRLRAEVAQAKRETDFYLRNVEQ) are a coiled coil. The tract at residues 200–242 (ADGDATRPNSSWTFTQRPTEQELRAQKGARPGGRERARLATVQ) is disordered. A compositionally biased stretch (polar residues) spans 206 to 217 (RPNSSWTFTQRP).

It belongs to the ESF2/ABP1 family. In terms of assembly, interacts with IGHMBP2. Interacts with ESF1/ABTAP.

It is found in the nucleus. The protein localises to the nucleolus. Functionally, may be a novel TATA-binding protein (TBP) which can function as a basal transcription activator. Can act as a regulator of basal transcription for class II genes. In Rattus norvegicus (Rat), this protein is Activator of basal transcription 1 (Abt1).